The chain runs to 415 residues: MASISETSDDGSNGGDPNQKPEEPHKNPQEGKEEENQNEKPKEDDHQEEEVENVPQIPPQMPLELIVSTIATLRRCHYPTLSLLSDSFRQVISSVDLFQTRSLIGSTEPVLYTLITFTSPNFEEPRWFILQRRNNTSLQLSLVTSLPPMFPGCTTVTIGHKIYVMGGLRSLNRRAKTVFVIDCRFHTWRYLQEMQVARSYAASAVIDGMIYVVGGSTKRSDDWVEVFNVETNTWENVPSVLSPYGRSKAPFNVHFVLDNKIYILDGNNRVAYDLRGRRWEDWGPAGNQLGYFWQVLYCVVDNLLYAVVPDHLHVTPIVVYDPREMGWRPVMGVDYLPNLVYSESRMTNFGGKLMILGCYQSQARFDYYGEVNVWCVEVALERREDGEIWGKVQSLSLVNKFRKSPVFVLSRTVTV.

The disordered stretch occupies residues 1–58 (MASISETSDDGSNGGDPNQKPEEPHKNPQEGKEEENQNEKPKEDDHQEEEVENVPQIP). The span at 19–45 (QKPEEPHKNPQEGKEEENQNEKPKEDD) shows a compositional bias: basic and acidic residues. One can recognise an F-box domain in the interval 56–103 (QIPPQMPLELIVSTIATLRRCHYPTLSLLSDSFRQVISSVDLFQTRSL). Kelch repeat units follow at residues 161–208 (KIYV…VIDG), 210–254 (IYVV…FNVH), 260–309 (KIYI…AVVP), and 311–355 (HLHV…KLMI).

The polypeptide is F-box/kelch-repeat protein At2g29600 (Arabidopsis thaliana (Mouse-ear cress)).